The sequence spans 275 residues: Interleukin-2 receptor subunit alpha (275 aa).

The first 21 residues, 1–21, serve as a signal peptide directing secretion; it reads MEPSLLLWGILTFVVVHGHVT. The region spanning 22 to 84 is the Sushi 1 domain; sequence ELCDENPPDI…SWENQCRCIS (63 aa). At 22 to 243 the chain is on the extracellular side; sequence ELCDENPPDI…ESFVFTTEYQ (222 aa). Disulfide bonds link Cys-24/Cys-67, Cys-49/Cys-80, and Cys-51/Cys-82. N-linked (GlcNAc...) asparagine glycans are attached at residues Asn-60 and Asn-70. The segment at 91 to 118 is disordered; it reads DGQIIPKPEEQKGKSPMGMQSQMQPTDQ. Over residues 108-118 the composition is skewed to polar residues; sequence GMQSQMQPTDQ. The 64-residue stretch at 123 to 186 folds into the Sushi 2 domain; it reads GHCREPPPWE…WTQPRLQCLS (64 aa). 2 cysteine pairs are disulfide-bonded: Cys-125-Cys-168 and Cys-152-Cys-184. Positions 188-213 are disordered; it reads RSDGWFPDDEEPQASTDAALGSDTSC. The helical transmembrane segment at 244-262 threads the bilayer; the sequence is IAVAGCVLLLISIVLLSGL. The Cytoplasmic portion of the chain corresponds to 263-275; the sequence is TWQRRWRKSRRTI.

As to quaternary structure, non-covalent dimer of an alpha and a beta subunit. IL2R exists in 3 different forms: a high affinity dimer, an intermediate affinity monomer (beta subunit), and a low affinity monomer (alpha subunit). The high and intermediate affinity forms also associate with a gamma subunit.

The protein localises to the membrane. Functionally, receptor for interleukin-2. The receptor is involved in the regulation of immune tolerance by controlling regulatory T cells (TREGs) activity. TREGs suppress the activation and expansion of autoreactive T-cells. The sequence is that of Interleukin-2 receptor subunit alpha (IL2RA) from Felis catus (Cat).